A 634-amino-acid chain; its full sequence is tRNA uridine 5-carboxymethylaminomethyl modification enzyme MnmG (634 aa).

14 to 19 (GGGHAG) contacts FAD. 279 to 293 (GPRYCPSIEDKVVRF) is an NAD(+) binding site.

Belongs to the MnmG family. In terms of assembly, homodimer. Heterotetramer of two MnmE and two MnmG subunits. It depends on FAD as a cofactor.

It is found in the cytoplasm. In terms of biological role, NAD-binding protein involved in the addition of a carboxymethylaminomethyl (cmnm) group at the wobble position (U34) of certain tRNAs, forming tRNA-cmnm(5)s(2)U34. The protein is tRNA uridine 5-carboxymethylaminomethyl modification enzyme MnmG of Xanthomonas campestris pv. campestris (strain B100).